The chain runs to 380 residues: Cytochrome b (380 aa).

Helical transmembrane passes span 33 to 53 (FGSL…FLAM), 77 to 98 (WLIR…FLHV), 113 to 133 (WNMG…GYVL), and 178 to 198 (FFAF…VHLL). Heme-binding residues include His83 and His97. Heme is bound by residues His182 and His196. Residue His201 coordinates a ubiquinone. A run of 4 helical transmembrane segments spans residues 226–246 (VKDF…TLFF), 288–308 (LGGV…PLLH), 320–340 (ITQT…WIGG), and 347–367 (FIII…IFMP).

It belongs to the cytochrome b family. The cytochrome bc1 complex contains 11 subunits: 3 respiratory subunits (MT-CYB, CYC1 and UQCRFS1), 2 core proteins (UQCRC1 and UQCRC2) and 6 low-molecular weight proteins (UQCRH/QCR6, UQCRB/QCR7, UQCRQ/QCR8, UQCR10/QCR9, UQCR11/QCR10 and a cleavage product of UQCRFS1). This cytochrome bc1 complex then forms a dimer. Heme serves as cofactor.

It localises to the mitochondrion inner membrane. In terms of biological role, component of the ubiquinol-cytochrome c reductase complex (complex III or cytochrome b-c1 complex) that is part of the mitochondrial respiratory chain. The b-c1 complex mediates electron transfer from ubiquinol to cytochrome c. Contributes to the generation of a proton gradient across the mitochondrial membrane that is then used for ATP synthesis. The protein is Cytochrome b (MT-CYB) of Microtus arvalis (Common vole).